The chain runs to 410 residues: MGAQVRLPPGEPCREGYVLSLVCPNSSQAWCEITNVSQLLASPVLYTDLNYSINNLSISANVENKYSLYVGLVLAVSSSIFIGSSFILKKKGLLQLASKGFTRAGQGGHSYLKEWLWWVGLLSMGAGEAANFAAYAFAPATLVTPLGALSVLISAILSSYFLNEHLNIHGKIGCILSILGSTVMVIHAPQEEEVTSLHEMEMKLRDPGFISFAVIITVISLVLILIVAPKKGQTNILVYISICSLIGAFSVSSVKGLGIAIKELIEWKPVYKHPLVFVLLAVLVLSVTTQINYLNKALDTFNTSLVTPIYYVFFTSMVVTCSAILFQEWYGMTAGDIIGTLSGFFTIIIGIFLLHAFKNTDITWSELTSTAKKEAVSLNVNENNYVLLENLECSAPGYNDDVTLFSRTDD.

The Extracellular portion of the chain corresponds to 1-67 (MGAQVRLPPG…ISANVENKYS (67 aa)). 4 N-linked (GlcNAc...) asparagine glycosylation sites follow: N25, N35, N50, and N55. The chain crosses the membrane as a helical span at residues 68–88 (LYVGLVLAVSSSIFIGSSFIL). The Cytoplasmic portion of the chain corresponds to 89-114 (KKKGLLQLASKGFTRAGQGGHSYLKE). A helical membrane pass occupies residues 115-135 (WLWWVGLLSMGAGEAANFAAY). A topological domain (extracellular) is located at residue A136. Residues 137–157 (FAPATLVTPLGALSVLISAIL) form a helical membrane-spanning segment. The Cytoplasmic portion of the chain corresponds to 158 to 165 (SSYFLNEH). The helical transmembrane segment at 166-186 (LNIHGKIGCILSILGSTVMVI) threads the bilayer. Topologically, residues 187-207 (HAPQEEEVTSLHEMEMKLRDP) are extracellular. A helical transmembrane segment spans residues 208 to 228 (GFISFAVIITVISLVLILIVA). The Cytoplasmic portion of the chain corresponds to 229-233 (PKKGQ). The chain crosses the membrane as a helical span at residues 234-254 (TNILVYISICSLIGAFSVSSV). Over 255-273 (KGLGIAIKELIEWKPVYKH) the chain is Extracellular. A helical transmembrane segment spans residues 274-294 (PLVFVLLAVLVLSVTTQINYL). Residues 295–305 (NKALDTFNTSL) lie on the Cytoplasmic side of the membrane. A helical membrane pass occupies residues 306 to 326 (VTPIYYVFFTSMVVTCSAILF). Residues 327-336 (QEWYGMTAGD) are Extracellular-facing. The helical transmembrane segment at 337–357 (IIGTLSGFFTIIIGIFLLHAF) threads the bilayer. At 358–410 (KNTDITWSELTSTAKKEAVSLNVNENNYVLLENLECSAPGYNDDVTLFSRTDD) the chain is on the cytoplasmic side.

This sequence belongs to the NIPA family. Expressed in the pancreatic islets.

The protein resides in the golgi apparatus membrane. It carries out the reaction Mg(2+)(in) = Mg(2+)(out). Its function is as follows. Acts as a Mg(2+) transporter. Can also transport other divalent cations such as Fe(2+), Sr(2+), Ba(2+), Mn(2+), Cu(2+) and Co(2+) but to a much less extent than Mg(2+). This chain is Magnesium transporter NIPA3 (NIPAL1), found in Homo sapiens (Human).